The following is a 411-amino-acid chain: Translation initiation factor 2 subunit gamma (411 aa).

The region spanning 9-201 (QPSVNIGMVG…AIEKYIPSPK (193 aa)) is the tr-type G domain. A G1 region spans residues 18–25 (GHVDHGKS). The Mg(2+) site is built by Asp21, Ser25, Gly46, and Ser48. Residue 21-26 (DHGKST) coordinates GTP. Residues 46 to 50 (GISIK) form a G2 region. The tract at residues 88-91 (DAPG) is G3. Residues 144-147 (NKID) and 179-181 (SAY) each bind GTP. Residues 144-147 (NKID) form a G4 region. Residues 179–181 (SAY) are G5.

Belongs to the TRAFAC class translation factor GTPase superfamily. Classic translation factor GTPase family. EIF2G subfamily. In terms of assembly, heterotrimer composed of an alpha, a beta and a gamma chain. Mg(2+) is required as a cofactor.

The enzyme catalyses GTP + H2O = GDP + phosphate + H(+). Functionally, eIF-2 functions in the early steps of protein synthesis by forming a ternary complex with GTP and initiator tRNA. In Thermoplasma acidophilum (strain ATCC 25905 / DSM 1728 / JCM 9062 / NBRC 15155 / AMRC-C165), this protein is Translation initiation factor 2 subunit gamma.